A 1468-amino-acid chain; its full sequence is Neuropathy target esterase sws (1468 aa).

Topologically, residues 1 to 34 (MDVLEMLRASASGSYNTIFSDAWCQYVSKQITAT) are lumenal. The helical transmembrane segment at 35 to 55 (VYMYCALVMMSLLFIAWFLYF) threads the bilayer. Over 56 to 1468 (KRMARLRLRD…RSSPNNETKN (1413 aa)) the chain is Cytoplasmic. 174 to 301 (IFGHFEKPVF…IRVIQVIMIR (128 aa)) serves as a coordination point for a nucleoside 3',5'-cyclic phosphate. Polar residues-rich tracts occupy residues 332 to 348 (TMSG…SRQA) and 357 to 366 (NQLNLMQSAA). Residues 332–411 (TMSGPINSQT…DGSFHGTTNL (80 aa)) form a disordered region. 2 positions are modified to phosphoserine: serine 442 and serine 451. Residues 480–607 (ELGL…VVRR) and 596–723 (IVLD…LSHR) each bind a nucleoside 3',5'-cyclic phosphate. One can recognise a PNPLA domain in the interval 950–1116 (LVLGGGGARG…VNNLPGHLWR (167 aa)). The GXGXXG signature appears at 954-959 (GGGARG). The GXSXG signature appears at 981–985 (GVSIG). The Nucleophile role is filled by serine 983. Aspartate 1103 serves as the catalytic Proton acceptor. Positions 1103-1105 (DGG) match the DGA/G motif. Serine 1197 carries the post-translational modification Phosphoserine. A disordered region spans residues 1368–1468 (ERKMDKSTQS…RSSPNNETKN (101 aa)). The segment covering 1374–1383 (STQSSPPTSS) has biased composition (low complexity). Over residues 1385–1395 (TDMRGKEEAKH) the composition is skewed to basic and acidic residues. A compositionally biased stretch (low complexity) spans 1419 to 1441 (TQTGQEQELQQQQKLQQLQQDQG). Residues 1446–1459 (QLVDKDKEEDKENR) are compositionally biased toward basic and acidic residues.

This sequence belongs to the NTE family. Interacts with Pka-C3; interaction inhibits the catalytic function of Pka-C3 and the esterase activity of sws.

The protein localises to the endoplasmic reticulum membrane. It catalyses the reaction a 1-acyl-sn-glycero-3-phosphocholine + H2O = sn-glycerol 3-phosphocholine + a fatty acid + H(+). Phospholipase B that deacylates intracellular phosphatidylcholine (PtdCho), generating glycerophosphocholine (GroPtdCho). This deacylation occurs at both sn-2 and sn-1 positions of PtdCho. Its specific chemical modification by certain organophosphorus (OP) compounds leads to distal axonopathy. Plays a role in the signaling mechanism between neurons and glia that regulates glia wrapping during development of the adult brain. Essential for membrane lipid homeostasis and cell survival in both neurons and glia of the adult brain. In Drosophila sechellia (Fruit fly), this protein is Neuropathy target esterase sws.